We begin with the raw amino-acid sequence, 408 residues long: Eukaryotic initiation factor 4A-II (408 aa).

Positions 1–22 (MSGGSADYNSREHGGPEGMDPD) are disordered. The short motif at 34 to 62 (DNFDDMNLKESLLRGIYAYGFEKPSAIQQ) is the Q motif element. Residues 65–236 (IIPCIKGYDV…KKFMRDPIRI (172 aa)) form the Helicase ATP-binding domain. 77-84 (QAQSGTGK) provides a ligand contact to ATP. The residue at position 160 (threonine 160) is a Phosphothreonine. Positions 183–186 (LDEA) match the DEAD box motif. The Helicase C-terminal domain occupies 247–408 (GIKQFYINVE…EMPMNVADLI (162 aa)).

This sequence belongs to the DEAD box helicase family. eIF4A subfamily. EIF4F is a multi-subunit complex, the composition of which varies with external and internal environmental conditions. It is composed of at least EIF4A, EIF4E and EIF4G1/EIFFG3. Interacts with EIF4E. May interact with NOM1.

The enzyme catalyses ATP + H2O = ADP + phosphate + H(+). Its function is as follows. ATP-dependent RNA helicase which is a subunit of the eIF4F complex involved in cap recognition and is required for mRNA binding to ribosome. In the current model of translation initiation, eIF4A unwinds RNA secondary structures in the 5'-UTR of mRNAs which is necessary to allow efficient binding of the small ribosomal subunit, and subsequent scanning for the initiator codon. The chain is Eukaryotic initiation factor 4A-II (EIF4A2) from Macaca fascicularis (Crab-eating macaque).